The following is a 173-amino-acid chain: Beta-defensin 129 (173 aa).

Positions 1–19 (MKLLFPIFASLMLQYKVNT) are cleaved as a signal peptide. 3 disulfide bridges follow: C27–C53, C34–C48, and C38–C54. The disordered stretch occupies residues 144 to 173 (STKSNIKESRDSATASPPPAPPPPNTLPTP). The segment covering 159–173 (SPPPAPPPPNTLPTP) has biased composition (pro residues).

This sequence belongs to the beta-defensin family.

Its subcellular location is the secreted. Has antibacterial activity. The protein is Beta-defensin 129 (DEFB129) of Hylobates lar (Lar gibbon).